The following is a 356-amino-acid chain: 3-isopropylmalate dehydrogenase (356 aa).

Arginine 95, arginine 105, arginine 133, and aspartate 223 together coordinate substrate. Aspartate 223, aspartate 247, and aspartate 251 together coordinate Mg(2+). 281-293 (GSAPDIAGQNKAN) provides a ligand contact to NAD(+).

This sequence belongs to the isocitrate and isopropylmalate dehydrogenases family. LeuB type 1 subfamily. In terms of assembly, homodimer. The cofactor is Mg(2+). Mn(2+) is required as a cofactor.

Its subcellular location is the cytoplasm. The enzyme catalyses (2R,3S)-3-isopropylmalate + NAD(+) = 4-methyl-2-oxopentanoate + CO2 + NADH. It functions in the pathway amino-acid biosynthesis; L-leucine biosynthesis; L-leucine from 3-methyl-2-oxobutanoate: step 3/4. Functionally, catalyzes the oxidation of 3-carboxy-2-hydroxy-4-methylpentanoate (3-isopropylmalate) to 3-carboxy-4-methyl-2-oxopentanoate. The product decarboxylates to 4-methyl-2 oxopentanoate. The chain is 3-isopropylmalate dehydrogenase from Neisseria gonorrhoeae (strain ATCC 700825 / FA 1090).